Consider the following 90-residue polypeptide: Probable Fe(2+)-trafficking protein (90 aa).

Belongs to the Fe(2+)-trafficking protein family. Monomer.

Could be a mediator in iron transactions between iron acquisition and iron-requiring processes, such as synthesis and/or repair of Fe-S clusters in biosynthetic enzymes. The sequence is that of Probable Fe(2+)-trafficking protein from Yersinia pseudotuberculosis serotype O:1b (strain IP 31758).